Reading from the N-terminus, the 496-residue chain is Aspartyl/glutamyl-tRNA(Asn/Gln) amidotransferase subunit B (496 aa).

A disordered region spans residues 475 to 496 (TGGSADPSKVNTLLREQLEDKK).

It belongs to the GatB/GatE family. GatB subfamily. As to quaternary structure, heterotrimer of A, B and C subunits.

The catalysed reaction is L-glutamyl-tRNA(Gln) + L-glutamine + ATP + H2O = L-glutaminyl-tRNA(Gln) + L-glutamate + ADP + phosphate + H(+). It catalyses the reaction L-aspartyl-tRNA(Asn) + L-glutamine + ATP + H2O = L-asparaginyl-tRNA(Asn) + L-glutamate + ADP + phosphate + 2 H(+). Functionally, allows the formation of correctly charged Asn-tRNA(Asn) or Gln-tRNA(Gln) through the transamidation of misacylated Asp-tRNA(Asn) or Glu-tRNA(Gln) in organisms which lack either or both of asparaginyl-tRNA or glutaminyl-tRNA synthetases. The reaction takes place in the presence of glutamine and ATP through an activated phospho-Asp-tRNA(Asn) or phospho-Glu-tRNA(Gln). The polypeptide is Aspartyl/glutamyl-tRNA(Asn/Gln) amidotransferase subunit B (Haloquadratum walsbyi (strain DSM 16790 / HBSQ001)).